The sequence spans 260 residues: Global transcriptional regulator CodY (260 aa).

Positions 1–159 are GAF domain; the sequence is MPNLLEKTRK…SSTVVGIQLL (159 aa). The H-T-H motif DNA-binding region spans 207–226; that stretch reads ASVIADRIGITRSVIVNALR.

The protein belongs to the CodY family.

It localises to the cytoplasm. DNA-binding global transcriptional regulator which is involved in the adaptive response to starvation and acts by directly or indirectly controlling the expression of numerous genes in response to nutrient availability. During rapid exponential growth, CodY is highly active and represses genes whose products allow adaptation to nutrient depletion. In Streptococcus pyogenes serotype M3 (strain SSI-1), this protein is Global transcriptional regulator CodY.